The primary structure comprises 125 residues: Large-conductance mechanosensitive channel (125 aa).

The next 2 membrane-spanning stretches (helical) occupy residues 15–35 and 67–87; these read MDLA…NSLV and GSFL…FFLI.

Belongs to the MscL family. As to quaternary structure, homopentamer.

It localises to the cell membrane. Its function is as follows. Channel that opens in response to stretch forces in the membrane lipid bilayer. May participate in the regulation of osmotic pressure changes within the cell. The polypeptide is Large-conductance mechanosensitive channel (Lactobacillus gasseri (strain ATCC 33323 / DSM 20243 / BCRC 14619 / CIP 102991 / JCM 1131 / KCTC 3163 / NCIMB 11718 / NCTC 13722 / AM63)).